An 881-amino-acid chain; its full sequence is MASTGATPMMQQYLSIKEQHRDAILFYRMGDFYEMFFEDAQTAAPVLEIALTSRNKNDTDPIPMCGVPVKAADGYIGRLIENGFKVAVCEQTEDPAAAKGLVRRDVVRIVTPGMIIDNALLEKGTNNYVVCLAHADGVVGFASVDISTGTFRVCESSDLRAVRHELLRIAPREVVIPESGADDAALSPFVSLFPPAIRTTLANREFDYRTACQRLTDQFQTRSLEGFGCRGLKPGIVAAGALLSYVNDTQRQKASHLTGLEVYSIDQYLLMDEVTCRNLELVANLRNNGRQGTLIDVLDACVTAMGSRLLRRWMLYPLLSAEAINRRLDAVAEAKEGLGTRKAVRELLKQVYDIERLTSRAVMGRVTPRDLLALKQTLFALPGLATELKSFDSPFFSFAGEPGPEGLDKLAGLADLLKAAVREDAPVSIADGGVINPDYHPRLAELVTISRDGKSSLARLEATEKEKTGISTLKVRYNKVFGYYIEVPRSQVGAVPAHYVRKQTLVNGERYITDELKVFEEKALGAEEQRVRLEQELFADIVGRVTACSPMLFAVARVAAGIDVLCALAQVADDHDYVRPEMLSGGEIIIEEGRHPVVERMLSGERYVPNSITLNDTDRQLLIITGPNMAGKSTVLRKVALFSVMAQMGSFVPARRAAMGVVDRLFTRVGALDNLASGQSTFMVEMEETANIINNATPKSLVVIDEIGRGTSTYDGLSIAWAVAEALHDLHGRGVKTLFATHYHELTELENTRPRVKNFHIAVKEWNDTIIFLRKLVEGSTNRSYGIQVARLAGIPGPVIARAKKILLDIEQGTYSFEAKSGTAPGTGQSGPVQLSLFTPPEQMLVDRLQKVDISTMTPLEALNCLHELQQKAHAISETDG.

An ATP-binding site is contributed by G626–S633.

It belongs to the DNA mismatch repair MutS family.

Functionally, this protein is involved in the repair of mismatches in DNA. It is possible that it carries out the mismatch recognition step. This protein has a weak ATPase activity. The polypeptide is DNA mismatch repair protein MutS (Desulfosudis oleivorans (strain DSM 6200 / JCM 39069 / Hxd3) (Desulfococcus oleovorans)).